The sequence spans 578 residues: Arginine--tRNA ligase (578 aa).

The short motif at 127-137 (PNLAKEMHVGH) is the 'HIGH' region element.

Belongs to the class-I aminoacyl-tRNA synthetase family. As to quaternary structure, monomer.

It is found in the cytoplasm. It catalyses the reaction tRNA(Arg) + L-arginine + ATP = L-arginyl-tRNA(Arg) + AMP + diphosphate. This chain is Arginine--tRNA ligase, found in Pseudomonas fluorescens (strain Pf0-1).